The primary structure comprises 437 residues: Matrix remodeling-associated protein 8 (437 aa).

The first 22 residues, 1-22, serve as a signal peptide directing secretion; that stretch reads MEQLAKLLLWQLLLQQSSVVYL. At 23–339 the chain is on the extracellular side; sequence YSVPADASNP…PESRIHFFQQ (317 aa). Ig-like V-type domains are found at residues 32–159 and 167–294; these read PDSV…LDIT and EYWD…VFVT. Residues Asn41, Asn121, Asn246, and Asn304 are each glycosylated (N-linked (GlcNAc...) asparagine). Cystine bridges form between Cys54–Cys139 and Cys188–Cys274. The helical transmembrane segment at 340–360 threads the bilayer; the sequence is LGYVLATLLLFVVLLIIVVFI. At 361-437 the chain is on the cytoplasmic side; that stretch reads TRKRRQRGYE…DKDFRKEYCK (77 aa).

In terms of assembly, homodimer in cis. Does not appear to form trans-homodimers.

Its subcellular location is the cell membrane. In terms of biological role, transmembrane protein which can modulate activity of various signaling pathways, probably via binding to integrin ITGAV:ITGB3. Mediates heterophilic cell-cell interactions in vitro. This is Matrix remodeling-associated protein 8 (MXRA8) from Gallus gallus (Chicken).